A 349-amino-acid polypeptide reads, in one-letter code: GDP-mannose:glycolipid 4-beta-D-mannosyltransferase (349 aa).

The N-terminal stretch at 1–14 (MSASASLPVTRAAA) is a signal peptide.

The protein belongs to the glycosyltransferase 94 family.

It is found in the cell inner membrane. The enzyme catalyses beta-D-GlcA-(1-&gt;2)-alpha-D-Man-(1-&gt;3)-beta-D-Glc-(1-&gt;4)-alpha-D-Glc-di-trans,octa-cis-undecaprenyl diphosphate + GDP-alpha-D-mannose = beta-D-Man-(1-&gt;4)-beta-D-GlcA-(1-&gt;2)-alpha-D-Man-(1-&gt;3)-beta-D-Glc-(1-&gt;4)-alpha-D-Glc-di-trans,octa-cis-undecaprenyl diphosphate + GDP + H(+). Its pathway is glycan biosynthesis; xanthan biosynthesis. In terms of biological role, nonprocessive beta-mannosyltransferase that catalyzes the transfer of a mannose residue from GDP-mannose to glucuronic acid-beta-1,2-mannose-alpha-1,3-glucose-beta-1,4-glucose-PP-polyisoprenyl to form the lipid-linked pentasaccharide repeating unit of xanthan, Man-GlcA-Man-Glc(2)-PP-Pol. Is involved in the biosynthesis of the exopolysaccharide xanthan. The polypeptide is GDP-mannose:glycolipid 4-beta-D-mannosyltransferase (gumI) (Xanthomonas campestris pv. campestris (strain ATCC 33913 / DSM 3586 / NCPPB 528 / LMG 568 / P 25)).